Consider the following 51-residue polypeptide: Large ribosomal subunit protein eL40 (51 aa).

The protein belongs to the eukaryotic ribosomal protein eL40 family.

The polypeptide is Large ribosomal subunit protein eL40 (Thermococcus gammatolerans (strain DSM 15229 / JCM 11827 / EJ3)).